Consider the following 977-residue polypeptide: Alanine--tRNA ligase (977 aa).

The tract at residues 512-535 (SQVDSKLQSSTPAGTGSYDSKQVS) is disordered. Residues histidine 618, histidine 622, cysteine 720, and histidine 724 each coordinate Zn(2+).

It belongs to the class-II aminoacyl-tRNA synthetase family. It depends on Zn(2+) as a cofactor.

The protein localises to the cytoplasm. It catalyses the reaction tRNA(Ala) + L-alanine + ATP = L-alanyl-tRNA(Ala) + AMP + diphosphate. Functionally, catalyzes the attachment of alanine to tRNA(Ala) in a two-step reaction: alanine is first activated by ATP to form Ala-AMP and then transferred to the acceptor end of tRNA(Ala). Also edits incorrectly charged Ser-tRNA(Ala) and Gly-tRNA(Ala) via its editing domain. The protein is Alanine--tRNA ligase of Leptospira interrogans serogroup Icterohaemorrhagiae serovar copenhageni (strain Fiocruz L1-130).